The chain runs to 856 residues: DNA mismatch repair protein MutS (856 aa).

615 to 622 (GPNMGGKS) is an ATP binding site. Over residues 798 to 807 (ETTGHQQAIK) the composition is skewed to polar residues. Residues 798-817 (ETTGHQQAIKNPSKAPREEQ) are disordered.

The protein belongs to the DNA mismatch repair MutS family.

Its function is as follows. This protein is involved in the repair of mismatches in DNA. It is possible that it carries out the mismatch recognition step. This protein has a weak ATPase activity. The polypeptide is DNA mismatch repair protein MutS (Photobacterium profundum (strain SS9)).